The sequence spans 351 residues: Photosystem II D2 protein (351 aa).

The chain crosses the membrane as a helical span at residues 39-59 (CAFLALGGWLTGTTFVTSWYT). His116 serves as a coordination point for chlorophyll a. Residues 123-139 (GFMLRQFEIARLVGIRP) traverse the membrane as a helical segment. 2 residues coordinate pheophytin a: Gln128 and Asn141. A helical transmembrane segment spans residues 151-164 (VFVSVFLMYPLGQS). His196 lines the chlorophyll a pocket. The helical transmembrane segment at 206–226 (GALLCAIHGATVENTLFEDGD) threads the bilayer. Positions 213 and 260 each coordinate a plastoquinone. His213 lines the Fe cation pocket. Residue His267 coordinates Fe cation. The helical transmembrane segment at 277 to 293 (GLWMSAVGIVGLALNLR) threads the bilayer.

The protein belongs to the reaction center PufL/M/PsbA/D family. As to quaternary structure, PSII is composed of 1 copy each of membrane proteins PsbA, PsbB, PsbC, PsbD, PsbE, PsbF, PsbH, PsbI, PsbJ, PsbK, PsbL, PsbM, PsbT, PsbX, PsbY, PsbZ, Psb30/Ycf12, peripheral proteins PsbO, CyanoQ (PsbQ), PsbU, PsbV and a large number of cofactors. It forms dimeric complexes. The D1/D2 heterodimer binds P680, chlorophylls that are the primary electron donor of PSII, and subsequent electron acceptors. It shares a non-heme iron and each subunit binds pheophytin, quinone, additional chlorophylls, carotenoids and lipids. There is also a Cl(-1) ion associated with D1 and D2, which is required for oxygen evolution. The PSII complex binds additional chlorophylls, carotenoids and specific lipids. is required as a cofactor.

Its subcellular location is the cellular thylakoid membrane. It carries out the reaction 2 a plastoquinone + 4 hnu + 2 H2O = 2 a plastoquinol + O2. Photosystem II (PSII) is a light-driven water:plastoquinone oxidoreductase that uses light energy to abstract electrons from H(2)O, generating O(2) and a proton gradient subsequently used for ATP formation. It consists of a core antenna complex that captures photons, and an electron transfer chain that converts photonic excitation into a charge separation. The D1/D2 (PsbA/PsbD) reaction center heterodimer binds P680, the primary electron donor of PSII as well as several subsequent electron acceptors. D2 is needed for assembly of a stable PSII complex. The sequence is that of Photosystem II D2 protein from Nostoc punctiforme (strain ATCC 29133 / PCC 73102).